We begin with the raw amino-acid sequence, 1026 residues long: Vacuolar protein sorting-associated protein 18 homolog (1026 aa).

Positions 858-896 (IVDFLKRNKQRLEKLERSMKEATEIASEIRDKQEKLKNR) form a coiled coil. The segment at 906-932 (CSHCARPISGRAFNVHSCRHFFHRECL) adopts an RING-type; degenerate zinc-finger fold.

Probable core component of at least two putative endosomal tethering complexes, the homotypic fusion and vacuole protein sorting (HOPS) complex and the class C core vacuole/endosome tethering (CORVET) complex. Their common core is composed of the class C Vps proteins vps-11, vps-16 and vps-18, which in HOPS further associates with vps-33.1, vps-39 and vps-41 and in CORVET with vps-8 and vps-33.2. As to expression, in hermaphrodites, expressed in coelomocytes and gonadal sheath cells.

It localises to the cytoplasm. It is found in the late endosome membrane. The protein resides in the lysosome membrane. The protein localises to the early endosome. Its subcellular location is the cytoplasmic vesicle. It localises to the autophagosome. It is found in the clathrin-coated vesicle. In terms of biological role, plays a role in vesicle-mediated protein trafficking to lysosomal compartments including the endocytic membrane transport and autophagic pathways. Believed to act as a core component of the putative HOPS and CORVET endosomal tethering complexes which are proposed to be involved in the rab-5-to-rab-7 endosome conversion probably implicating sand-1, and via binding SNAREs and SNARE complexes to mediate tethering and docking events during SNARE-mediated membrane fusion. The HOPS complex is proposed to be recruited to rab-7 on the late endosomal membrane and to regulate late endocytic, phagocytic and autophagic traffic towards lysosomes. Within the HOPS complex, contributes to the normal development of gut granules in intestinal cells of the embryo, and also promotes the trafficking of embryonic intestinal gut granules away from lysosomes. The CORVET complex is proposed to function as a rab-5 effector to mediate early endosome fusion probably in specific endosome subpopulations. Required for fusion of endosomes and autophagosomes with lysosomes. Plays a role in the degradation of apoptotic cells during programmed cell death. This is Vacuolar protein sorting-associated protein 18 homolog from Caenorhabditis elegans.